The following is a 107-amino-acid chain: Large ribosomal subunit protein P1 (107 aa).

Positions 67 to 82 (PTATSAAAAPAAGEAS) are enriched in low complexity. The interval 67-107 (PTATSAAAAPAAGEASGKAEEKKKEEPEEEGDDDMGFGLFD) is disordered. A compositionally biased stretch (basic and acidic residues) spans 83 to 92 (GKAEEKKKEE).

The protein belongs to the eukaryotic ribosomal protein P1/P2 family. In terms of assembly, P1 and P2 exist as dimers at the large ribosomal subunit.

Plays an important role in the elongation step of protein synthesis. The chain is Large ribosomal subunit protein P1 from Leishmania peruviana.